Consider the following 495-residue polypeptide: UDP-N-acetylmuramoyl-L-alanyl-D-glutamate--2,6-diaminopimelate ligase (495 aa).

Residues Leu27, Ser29, and 44 to 46 (HQA) contribute to the UDP-N-acetyl-alpha-D-muramoyl-L-alanyl-D-glutamate site. 116 to 122 (GTNGKTT) provides a ligand contact to ATP. UDP-N-acetyl-alpha-D-muramoyl-L-alanyl-D-glutamate is bound by residues Asn157, 158–159 (TT), Ser185, Gln191, and Arg193. Lys225 carries the N6-carboxylysine modification. Meso-2,6-diaminopimelate-binding positions include Arg390, 414-417 (DNPR), Gly465, and Glu469. A Meso-diaminopimelate recognition motif motif is present at residues 414–417 (DNPR).

This sequence belongs to the MurCDEF family. MurE subfamily. Mg(2+) serves as cofactor. Post-translationally, carboxylation is probably crucial for Mg(2+) binding and, consequently, for the gamma-phosphate positioning of ATP.

It localises to the cytoplasm. It catalyses the reaction UDP-N-acetyl-alpha-D-muramoyl-L-alanyl-D-glutamate + meso-2,6-diaminopimelate + ATP = UDP-N-acetyl-alpha-D-muramoyl-L-alanyl-gamma-D-glutamyl-meso-2,6-diaminopimelate + ADP + phosphate + H(+). The protein operates within cell wall biogenesis; peptidoglycan biosynthesis. Catalyzes the addition of meso-diaminopimelic acid to the nucleotide precursor UDP-N-acetylmuramoyl-L-alanyl-D-glutamate (UMAG) in the biosynthesis of bacterial cell-wall peptidoglycan. This chain is UDP-N-acetylmuramoyl-L-alanyl-D-glutamate--2,6-diaminopimelate ligase, found in Enterobacter sp. (strain 638).